The following is a 132-amino-acid chain: Chemokine-like protein TAFA-5 (132 aa).

Positions 1–43 (MAPSPRTGSRQDATALPSMSSTFWAFMILASLLIAYCSQLAAG) are cleaved as a signal peptide. Residue Asn-113 is glycosylated (N-linked (GlcNAc...) asparagine).

Belongs to the TAFA family.

It localises to the secreted. Acts as a chemokine-like protein by regulating cell proliferation and migration through activation of G protein-coupled receptors (GPCRs), such as S1PR2 and FPR2. Stimulates chemotactic migration of macrophages mediated by the MAPK3/ERK1 and AKT1 pathway. Blocks TNFSF11/RANKL-induced osteoclast formation from macrophages by inhibiting up-regulation of osteoclast fusogenic and differentiation genes. Stimulation of macrophage migration and inhibition of osteoclast formation is mediated through the GPCR FPR2. Acts as an adipokine by negatively regulating vascular smooth muscle cell (VSMC) proliferation and migration in response to platelet-derived growth factor stimulation via GPCR S1PR2 and G protein GNA12/GNA13-transmitted RHOA signaling. Inhibits injury-induced cell proliferation and neointima formation in the femoral arteries. The protein is Chemokine-like protein TAFA-5 (TAFA5) of Bos taurus (Bovine).